The following is a 78-amino-acid chain: Small ribosomal subunit protein uS17 (78 aa).

This sequence belongs to the universal ribosomal protein uS17 family. As to quaternary structure, part of the 30S ribosomal subunit.

Its function is as follows. One of the primary rRNA binding proteins, it binds specifically to the 5'-end of 16S ribosomal RNA. This is Small ribosomal subunit protein uS17 from Pelagibacter ubique (strain HTCC1062).